Reading from the N-terminus, the 495-residue chain is MVSEITHKSYPLHFVLFPFMAQGHMIPMVDIARLLAQRGVKITIVTTPHNAARFENVLSRAIESGLPISIVQVKLPSQEAGLPEGNETFDSLVSMELLVPFFKAVNMLEEPVQKLFEEMSPQPSCIISDFCLPYTSKIAKKFNIPKILFHGMCCFCLLCMHVLRKNREILENLKSDKEHFVVPYFPDRVEFTRPQVPMATYVPGEWHEIKEDIVEADKTSYGVIVNTYQELEPAYANDYKEARSGKAWTIGPVSLCNKVGADKAERGNKADIDQDECLKWLDSKEEGSVLYVCLGSICSLPLSQLKELGLGLEESQRPFIWVVRGWEKNKELLEWFSESGFEERVKDRGLLIKGWSPQMLILAHHSVGGFLTHCGWNSTLEGITSGIPLLTWPLFGDQFCNQKLVVQVLKVGVSAGVEEVTNWGEEEKIGVLVDKEGVKKAVEELMGESDDAKERRKRVKELGQLAQKAVEEGGSSHSNITSLLEDIMQLAQSNN.

The active-site Proton acceptor is the histidine 24. Position 24 (histidine 24) interacts with an anthocyanidin. Aspartate 129 (charge relay) is an active-site residue. Glutamine 358, histidine 373, tryptophan 376, asparagine 377, serine 378, and glutamate 381 together coordinate UDP-alpha-D-glucose. An anthocyanidin is bound at residue glycine 396. Residues aspartate 397 and glutamine 398 each coordinate UDP-alpha-D-glucose.

The protein belongs to the UDP-glycosyltransferase family.

It carries out the reaction oleanolate + UDP-alpha-D-glucose = oleanolate 3-O-beta-D-glucoside + UDP + H(+). Its function is as follows. Catalyzes the transfer of a glucose (Glc) moiety from UDP-Glc to the C-3 position of the oleanane sapogenins oleanolate and hederagenin, and to the C-28 carboxylic group of the lupane sapogenin betulinate. The monoglucosylated hederagenin 3-O-beta-D-glucoside is a feeding deterrent of the yellow-striped flea beetle (Phyllotreta nemorum). The chain is UDP-glycosyltransferase 73C11 from Barbarea vulgaris (Yellow rocket).